Consider the following 566-residue polypeptide: Macrophage colony-stimulating factor 1 (566 aa).

The signal sequence occupies residues 1–32; sequence MTARGAAGRCPSSTWMGSRLLLVCLLVSRSVA. Residues 33-508 lie on the Extracellular side of the membrane; it reads EVSEHCSHMI…SSIQDPQTSA (476 aa). 3 N-linked (GlcNAc...) asparagine glycosylation sites follow: N106, N153, and N171. 2 disordered regions span residues 197-417 and 434-484; these read PSSD…KLLP and GKKS…GAAR. Positions 253 to 265 are enriched in polar residues; sequence PRSTCQTLESTEQ. O-linked (Xyl...) (chondroitin sulfate) serine glycosylation is present at S302. Over residues 348 to 360 the composition is skewed to polar residues; that stretch reads DQQPTNITDTPLT. An N-linked (GlcNAc...) asparagine glycan is attached at N353. 2 O-linked (GalNAc...) threonine glycosylation sites follow: T355 and T357. The segment covering 377 to 394 has biased composition (basic and acidic residues); the sequence is EKTDGSSTLREDQQEPRS. Polar residues predominate over residues 400-410; that stretch reads LNPQRVGNSAT. The span at 434–445 shows a compositional bias: basic and acidic residues; the sequence is GKKSTRDRRSPA. A helical membrane pass occupies residues 509 to 531; sequence FVFWVLGIILVLLAVGGLLFYSW. The Cytoplasmic segment spans residues 532-566; it reads KRRSHRDPRTLDSSVGRPEGSSLAQDEDRQVELPV. Residues 538–566 form a disordered region; that stretch reads DPRTLDSSVGRPEGSSLAQDEDRQVELPV. Residues 557–566 show a composition bias toward basic and acidic residues; sequence DEDRQVELPV.

As to quaternary structure, homodimer or heterodimer; disulfide-linked. Likely to exist in multiple forms: homodimer consisting of 2 identical 150-200 kDa proteoglycan subunits, heterodimer consisting of a 150-200 kDa proteoglycan subunit and a truncated 43 kDa subunit, and a homodimer consisting of 2 identical 43 kDa subunits. Interacts with CSF1R. Post-translationally, N-glycosylated. O-glycosylated; contains chondroitin sulfate.

It localises to the cell membrane. The protein resides in the secreted. It is found in the extracellular space. Functionally, cytokine that plays an essential role in the regulation of survival, proliferation and differentiation of hematopoietic precursor cells, especially mononuclear phagocytes, such as macrophages and monocytes. Promotes the release of pro-inflammatory chemokines, and thereby plays an important role in innate immunity and in inflammatory processes. Plays an important role in the regulation of osteoclast proliferation and differentiation, the regulation of bone resorption, and is required for normal bone development. Required for normal male and female fertility. Promotes reorganization of the actin cytoskeleton, regulates formation of membrane ruffles, cell adhesion and cell migration. Plays a role in lipoprotein clearance. The chain is Macrophage colony-stimulating factor 1 (Csf1) from Rattus norvegicus (Rat).